Here is a 1894-residue protein sequence, read N- to C-terminus: Plexin-A2 (1894 aa).

An N-terminal signal peptide occupies residues 1–34 (MEQRRPWPRALEVDSRSVVLLSVVWVLLAPPAAG). Positions 35–508 (MPQFSTFHSE…SERQVTRVPV (474 aa)) constitute a Sema domain. The Extracellular segment spans residues 35 to 1237 (MPQFSTFHSE…VISDSLLTLP (1203 aa)). Asparagine 76 and asparagine 91 each carry an N-linked (GlcNAc...) asparagine glycan. 10 disulfide bridges follow: cysteine 94–cysteine 103, cysteine 129–cysteine 137, cysteine 284–cysteine 405, cysteine 300–cysteine 356, cysteine 374–cysteine 393, cysteine 511–cysteine 528, cysteine 517–cysteine 559, cysteine 520–cysteine 537, cysteine 531–cysteine 543, and cysteine 594–cysteine 613. An N-linked (GlcNAc...) asparagine glycan is attached at asparagine 327. N-linked (GlcNAc...) asparagine glycosylation is found at asparagine 598, asparagine 696, and asparagine 756. IPT/TIG domains are found at residues 858-951 (PQIT…QYTF), 954-1037 (PSVL…QFEY), 1041-1139 (PRVQ…KFIY), and 1143-1228 (PTFE…SVSV). N-linked (GlcNAc...) asparagine glycosylation occurs at asparagine 1205. The chain crosses the membrane as a helical span at residues 1238–1258 (AIVSIAAGGSLLLIIVIIVLI). At 1259–1894 (AYKRKSREND…QLINAMSIES (636 aa)) the chain is on the cytoplasmic side. Residues 1261-1310 (KRKSRENDLTLKRLQMQMDNLESRVALECKEAFAELQTDINELTSDLDRS) are a coiled coil. At serine 1612 the chain carries Phosphoserine.

It belongs to the plexin family. Homodimer. The PLXNA2 homodimer interacts with a SEMA6A homodimer, giving rise to a heterotetramer. Interacts directly with NRP1 and NRP2. Interacts with RND1. Detected in fetal brain.

It is found in the cell membrane. In terms of biological role, coreceptor for SEMA3A and SEMA6A. Necessary for signaling by SEMA6A and class 3 semaphorins and subsequent remodeling of the cytoskeleton. Plays a role in axon guidance, invasive growth and cell migration. Class 3 semaphorins bind to a complex composed of a neuropilin and a plexin. The plexin modulates the affinity of the complex for specific semaphorins, and its cytoplasmic domain is required for the activation of down-stream signaling events in the cytoplasm. The sequence is that of Plexin-A2 (PLXNA2) from Homo sapiens (Human).